A 1071-amino-acid polypeptide reads, in one-letter code: DNA-directed RNA polymerase subunit beta (1071 aa).

This sequence belongs to the RNA polymerase beta chain family. As to quaternary structure, in plastids the minimal PEP RNA polymerase catalytic core is composed of four subunits: alpha, beta, beta', and beta''. When a (nuclear-encoded) sigma factor is associated with the core the holoenzyme is formed, which can initiate transcription.

The protein resides in the plastid. The protein localises to the chloroplast. The catalysed reaction is RNA(n) + a ribonucleoside 5'-triphosphate = RNA(n+1) + diphosphate. DNA-dependent RNA polymerase catalyzes the transcription of DNA into RNA using the four ribonucleoside triphosphates as substrates. The polypeptide is DNA-directed RNA polymerase subunit beta (Drimys granadensis).